The following is a 354-amino-acid chain: Myosin-binding protein H-like (354 aa).

A disordered region spans residues 1–47 (MEAATAPEVAAGSKLKVKEASPADAEPPQASPGQGAGSPTPQLLPPI). Serine 38 is modified (phosphoserine). Residues 45 to 139 (PPIEEHPKIW…GGLEATATID (95 aa)) enclose the Ig-like C2-type 1 domain. Residues 148 to 238 (PPQSIKLVDV…ETAPITTDLA (91 aa)) form the Fibronectin type-III domain. An Ig-like C2-type 2 domain is found at 261 to 345 (PKFTQPLADC…VNPLGEASVD (85 aa)). A disulfide bridge links cysteine 282 with cysteine 333. Arginine 321 is modified (omega-N-methylarginine).

Belongs to the immunoglobulin superfamily. MyBP family. As to expression, expressed in heart, with higher expression in the atria. In terms of tissue distribution, expressed in left atrium and ventricle, arteria mammaria interna and skeletal muscle. Expressed specifically en the left atrium.

Its subcellular location is the cytoplasm. It localises to the myofibril. It is found in the sarcomere. In terms of biological role, myosin-binding protein which plays a role in cardiac function. Seems to regulate conduction in the atria and ventricular conduction systems. This is Myosin-binding protein H-like from Homo sapiens (Human).